A 179-amino-acid polypeptide reads, in one-letter code: ATP synthase subunit delta (179 aa).

The protein belongs to the ATPase delta chain family. As to quaternary structure, F-type ATPases have 2 components, F(1) - the catalytic core - and F(0) - the membrane proton channel. F(1) has five subunits: alpha(3), beta(3), gamma(1), delta(1), epsilon(1). F(0) has three main subunits: a(1), b(2) and c(10-14). The alpha and beta chains form an alternating ring which encloses part of the gamma chain. F(1) is attached to F(0) by a central stalk formed by the gamma and epsilon chains, while a peripheral stalk is formed by the delta and b chains.

It is found in the cell inner membrane. Functionally, f(1)F(0) ATP synthase produces ATP from ADP in the presence of a proton or sodium gradient. F-type ATPases consist of two structural domains, F(1) containing the extramembraneous catalytic core and F(0) containing the membrane proton channel, linked together by a central stalk and a peripheral stalk. During catalysis, ATP synthesis in the catalytic domain of F(1) is coupled via a rotary mechanism of the central stalk subunits to proton translocation. This protein is part of the stalk that links CF(0) to CF(1). It either transmits conformational changes from CF(0) to CF(1) or is implicated in proton conduction. This is ATP synthase subunit delta from Anaeromyxobacter dehalogenans (strain 2CP-1 / ATCC BAA-258).